A 103-amino-acid chain; its full sequence is DNA-binding protein TRF1 (103 aa).

Its function is as follows. DNA-binding protein that recognizes the inverted terminal repeats of the pGKl linear DNA plasmids. The sequence is that of DNA-binding protein TRF1 (TRF1) from Kluyveromyces lactis (strain ATCC 8585 / CBS 2359 / DSM 70799 / NBRC 1267 / NRRL Y-1140 / WM37) (Yeast).